The primary structure comprises 53 residues: uncharacterized protein (53 aa).

Residues 28-45 traverse the membrane as a helical segment; it reads AIVFSLAVFGIVEAYYYW.

The protein resides in the host membrane. This is an uncharacterized protein from Acidianus convivator (ABV).